The primary structure comprises 174 residues: Crossover junction endodeoxyribonuclease RuvC (174 aa).

Catalysis depends on residues aspartate 8, glutamate 68, and aspartate 140. Aspartate 8, glutamate 68, and aspartate 140 together coordinate Mg(2+).

It belongs to the RuvC family. As to quaternary structure, homodimer which binds Holliday junction (HJ) DNA. The HJ becomes 2-fold symmetrical on binding to RuvC with unstacked arms; it has a different conformation from HJ DNA in complex with RuvA. In the full resolvosome a probable DNA-RuvA(4)-RuvB(12)-RuvC(2) complex forms which resolves the HJ. Requires Mg(2+) as cofactor.

The protein resides in the cytoplasm. The enzyme catalyses Endonucleolytic cleavage at a junction such as a reciprocal single-stranded crossover between two homologous DNA duplexes (Holliday junction).. Functionally, the RuvA-RuvB-RuvC complex processes Holliday junction (HJ) DNA during genetic recombination and DNA repair. Endonuclease that resolves HJ intermediates. Cleaves cruciform DNA by making single-stranded nicks across the HJ at symmetrical positions within the homologous arms, yielding a 5'-phosphate and a 3'-hydroxyl group; requires a central core of homology in the junction. The consensus cleavage sequence is 5'-(A/T)TT(C/G)-3'. Cleavage occurs on the 3'-side of the TT dinucleotide at the point of strand exchange. HJ branch migration catalyzed by RuvA-RuvB allows RuvC to scan DNA until it finds its consensus sequence, where it cleaves and resolves the cruciform DNA. This chain is Crossover junction endodeoxyribonuclease RuvC, found in Legionella pneumophila (strain Corby).